A 355-amino-acid polypeptide reads, in one-letter code: 45 kDa calcium-binding protein (355 aa).

An N-terminal signal peptide occupies residues 1 to 29 (MASRQAPLCGLAPCCLWLLGVVLLMNASA). N-linked (GlcNAc...) asparagine glycosylation is present at N33. EF-hand domains lie at 91-126 (KSRR…KTAE) and 130-165 (EAVA…TKGH). S92 carries the post-translational modification Phosphoserine. D104, N106, D108, R110, E115, D143, D145, D147, H149, and E154 together coordinate Ca(2+). T186 and T210 each carry phosphothreonine. EF-hand domains lie at 226–261 (MLQF…TVEN), 271–306 (WVRD…MNEF), and 307–342 (SALN…FTGS). Ca(2+) contacts are provided by D239, D241, D243, K245, and E250. The residue at position 258 (T258) is a Phosphothreonine. Residues D284, N286, and D288 each contribute to the Ca(2+) site. Residue T292 is modified to Phosphothreonine. Residues E295, D320, N322, N324, Y326, and E331 each contribute to the Ca(2+) site. The necessary for intracellular retention in Golgi apparatus lumen stretch occupies residues 302-355 (PMNEFSALNEAKQMIAIADENQNHYLEPEEVLKYSEFFTGSKLVDYARSVHEEF).

It belongs to the CREC family.

Its subcellular location is the golgi apparatus lumen. In terms of biological role, may regulate calcium-dependent activities in the endoplasmic reticulum lumen or post-ER compartment. This is 45 kDa calcium-binding protein (SDF4) from Bos taurus (Bovine).